The sequence spans 357 residues: DNA replication and repair protein RecF (357 aa).

Residue glycine 30–threonine 37 participates in ATP binding.

The protein belongs to the RecF family.

The protein localises to the cytoplasm. Functionally, the RecF protein is involved in DNA metabolism; it is required for DNA replication and normal SOS inducibility. RecF binds preferentially to single-stranded, linear DNA. It also seems to bind ATP. In Escherichia coli O7:K1 (strain IAI39 / ExPEC), this protein is DNA replication and repair protein RecF.